The following is a 412-amino-acid chain: Argininosuccinate synthase (412 aa).

10-18 (AYSGGLDTS) is an ATP binding site. Tyrosine 89 serves as a coordination point for L-citrulline. Residue glycine 119 coordinates ATP. Threonine 121, asparagine 125, and aspartate 126 together coordinate L-aspartate. Asparagine 125 is a binding site for L-citrulline. Arginine 129, serine 177, glutamate 261, and tyrosine 273 together coordinate L-citrulline.

It belongs to the argininosuccinate synthase family. Type 1 subfamily. As to quaternary structure, homotetramer.

Its subcellular location is the cytoplasm. It catalyses the reaction L-citrulline + L-aspartate + ATP = 2-(N(omega)-L-arginino)succinate + AMP + diphosphate + H(+). It functions in the pathway amino-acid biosynthesis; L-arginine biosynthesis; L-arginine from L-ornithine and carbamoyl phosphate: step 2/3. The sequence is that of Argininosuccinate synthase from Bifidobacterium longum subsp. infantis (strain ATCC 15697 / DSM 20088 / JCM 1222 / NCTC 11817 / S12).